A 146-amino-acid chain; its full sequence is MMDINEIREYLPHRYPFLLVDRVVDLDVEGKQIRAYKNVSINEPFFNGHFPEHPIMPGVLIIEAMAQAAGILGFKMMGVKPADGTLYYFVGSDKLRFRSPVLPGDQLTLEAKYLSDRRSIWKFECRATVDGKEVCSAEIICAERKL.

Residue H49 is part of the active site.

The protein belongs to the thioester dehydratase family. FabZ subfamily.

It localises to the cytoplasm. The catalysed reaction is a (3R)-hydroxyacyl-[ACP] = a (2E)-enoyl-[ACP] + H2O. Functionally, involved in unsaturated fatty acids biosynthesis. Catalyzes the dehydration of short chain beta-hydroxyacyl-ACPs and long chain saturated and unsaturated beta-hydroxyacyl-ACPs. This is 3-hydroxyacyl-[acyl-carrier-protein] dehydratase FabZ from Ectopseudomonas mendocina (strain ymp) (Pseudomonas mendocina).